Here is a 449-residue protein sequence, read N- to C-terminus: UNC93-like protein MFSD11 (449 aa).

Residues 8 to 28 traverse the membrane as a helical segment; that stretch reads LFNIVILGVAFMFMFTAFQTC. Asn-40 carries N-linked (GlcNAc...) asparagine glycosylation. A run of 5 helical transmembrane segments spans residues 53-73, 74-94, 96-116, 138-158, and 170-190; these read AIIY…VAIV, GPQI…AVFI, PFPW…AVLW, IFWA…YFAW, and RTVF…FFLI. Residue Ser-204 is modified to Phosphoserine. Helical transmembrane passes span 239 to 259, 277 to 297, 309 to 329, 359 to 379, 385 to 405, and 410 to 430; these read MLLL…FSGV, LIGL…SLFG, PVVL…FLNM, FLLG…LGFL, APAF…AFFY, and LLHW…ISFF.

It belongs to the unc-93 family. In terms of tissue distribution, widely expressed.

The protein localises to the membrane. This Mus musculus (Mouse) protein is UNC93-like protein MFSD11 (Mfsd11).